A 302-amino-acid chain; its full sequence is Transmembrane protein 191 (302 aa).

Residues 5–147 are a coiled coil; it reads QEQLLQLQKD…HLELAEAKFS (143 aa). Positions 39 to 66 are disordered; it reads LTGRLEELRERERSLQRRRSQASRAIRG. Basic and acidic residues predominate over residues 42-53; the sequence is RLEELRERERSL. A helical membrane pass occupies residues 242 to 262; that stretch reads LQTLLLLPLGFLVLPLIYVVL.

The protein belongs to the TMEM191 family.

The protein resides in the membrane. The polypeptide is Transmembrane protein 191 (Mus musculus (Mouse)).